The sequence spans 354 residues: Uroporphyrinogen decarboxylase (354 aa).

Substrate is bound by residues 27-31 (RQAGR), D77, Y153, T208, and H326.

It belongs to the uroporphyrinogen decarboxylase family. In terms of assembly, homodimer.

It is found in the cytoplasm. It catalyses the reaction uroporphyrinogen III + 4 H(+) = coproporphyrinogen III + 4 CO2. Its pathway is porphyrin-containing compound metabolism; protoporphyrin-IX biosynthesis; coproporphyrinogen-III from 5-aminolevulinate: step 4/4. Functionally, catalyzes the decarboxylation of four acetate groups of uroporphyrinogen-III to yield coproporphyrinogen-III. The sequence is that of Uroporphyrinogen decarboxylase from Neisseria gonorrhoeae (strain NCCP11945).